Reading from the N-terminus, the 1132-residue chain is Serine/threonine-protein kinase spk-1 (1132 aa).

Residues 75–95 (GGSLILTDIFPTVLFMFVVLF) traverse the membrane as a helical segment. Disordered stretches follow at residues 240–388 (NEDQ…DSDD) and 419–481 (NKKA…KRGG). 2 stretches are compositionally biased toward acidic residues: residues 281–290 (SEDEDVESQE) and 311–336 (DEPI…LGDE). The span at 362-372 (DSSVSSSTSST) shows a compositional bias: low complexity. The span at 373 to 388 (PDDDEDDSATSYDSDD) shows a compositional bias: acidic residues. Residues 421–433 (KAEVNANEERMDD) show a composition bias toward basic and acidic residues. Low complexity predominate over residues 434–443 (VSVSPGRSDS). Residues 495 to 1044 (YHVIRKLGWG…ANDALKHPFL (550 aa)) form the Protein kinase domain. Residues 501 to 509 (LGWGHFSTV) and Lys524 contribute to the ATP site. The active-site Proton acceptor is Asp628. The tract at residues 1066–1121 (QVPEALDGNQEVYRDENDSNSASERSANRSAGSDDEEEFHMDRPGPSGVINEPADV) is disordered. Over residues 1084–1096 (SNSASERSANRSA) the composition is skewed to low complexity.

The protein belongs to the protein kinase superfamily. Ser/Thr protein kinase family.

It localises to the membrane. The enzyme catalyses L-seryl-[protein] + ATP = O-phospho-L-seryl-[protein] + ADP + H(+). It catalyses the reaction L-threonyl-[protein] + ATP = O-phospho-L-threonyl-[protein] + ADP + H(+). Functionally, required for embryogenesis and germline development in both adult hermaphrodites and males. SR-protein kinase (SRPK) that binds directly to and phosphorylates RS domains. The chain is Serine/threonine-protein kinase spk-1 (spk-1) from Caenorhabditis briggsae.